Here is a 1072-residue protein sequence, read N- to C-terminus: Teashirt homolog 3 (1072 aa).

3 disordered regions span residues 44–71, 130–153, and 228–247; these read ACPS…SETS, PSSE…CGSG, and HYRD…WSKP. Basic and acidic residues predominate over residues 57–71; it reads SSHEMDSESHISETS. 2 consecutive C2H2-type zinc fingers follow at residues 204-228 and 265-289; these read FRCK…ETGH and LKCM…KTKH. Basic and acidic residues predominate over residues 228–237; the sequence is HYRDDNHETD. The tract at residues 315-336 is disordered; the sequence is SLELELPSSPDSTGGTPKATLS. The C2H2-type 3; atypical zinc-finger motif lies at 376-400; sequence LKCMECGSSHDTLQELTAHMMVTGH. Residues 469–481 are compositionally biased toward basic and acidic residues; sequence AVLDEKPKEKEKA. Disordered stretches follow at residues 469–489, 569–594, 616–690, 784–815, and 846–888; these read AVLD…EKYD, NSEI…PMPK, EKMK…PLSG, TKGK…TVTT, and TESH…RQSN. 2 stretches are compositionally biased toward polar residues: residues 571–593 and 649–660; these read EIVS…SPMP and SSGSGFKSQENS. Position 672 is a phosphoserine (Ser672). Low complexity-rich tracts occupy residues 791 to 815 and 847 to 860; these read GCSL…TVTT and ESHT…SSIS. The homeobox; atypical DNA-binding region spans 882–952; it reads RKGRQSNWNP…NVKYQLRRTG (71 aa). 2 consecutive C2H2-type zinc fingers follow at residues 967–989 and 1032–1055; these read FFCN…LESH and YQCK…SKTH.

This sequence belongs to the teashirt C2H2-type zinc-finger protein family. As to quaternary structure, interacts (via N-terminus) with HDAC1 and HDAC2; the interaction is direct. Found in a trimeric complex with APBB1 and HDAC1; the interaction between HDAC1 and APBB1 is mediated by TSHZ3. Interacts (via homeobox domain) with APBB1 (via PID domain 1). In terms of tissue distribution, expressed in cortical neurons.

Its subcellular location is the nucleus. It localises to the cell projection. The protein resides in the growth cone. In terms of biological role, transcriptional regulator involved in developmental processes. Functions in association with APBB1, SET and HDAC factors as a transcriptional repressor, that inhibits the expression of CASP4. TSHZ3-mediated transcription repression involves the recruitment of histone deacetylases HDAC1 and HDAC2. Associates with chromatin in a region surrounding the CASP4 transcriptional start site(s). Regulates the development of neurons involved in both respiratory rhythm and airflow control. Promotes maintenance of nucleus ambiguus (nA) motoneurons, which govern upper airway function, and establishes a respiratory rhythm generator (RRG) activity compatible with survival at birth. Involved in the differentiation of the proximal uretic smooth muscle cells during developmental processes. Involved in the up-regulation of myocardin, that directs the expression of smooth muscle cells in the proximal ureter. Involved in the modulation of glutamatergic synaptic transmission and long-term synaptic potentiation. The chain is Teashirt homolog 3 (Tshz3) from Rattus norvegicus (Rat).